Here is a 69-residue protein sequence, read N- to C-terminus: Large ribosomal subunit protein bL28 (69 aa).

It belongs to the bacterial ribosomal protein bL28 family.

The polypeptide is Large ribosomal subunit protein bL28 (Desulfovibrio desulfuricans (strain ATCC 27774 / DSM 6949 / MB)).